The primary structure comprises 291 residues: Tyrosine-protein kinase PtkA (291 aa).

Residues 1-79 form a disordered region; sequence MSSPRERRPA…RRASSPGESP (79 aa). Polar residues predominate over residues 23–60; that stretch reads HQTSRSSPDTTAPTGSGLSNRFVNDNGIVTDTTASGTN. Residue Tyr-262 is modified to Phosphotyrosine.

Belongs to the HAD-like hydrolase superfamily. CbbY/CbbZ/Gph/YieH family. Interacts with PtpA. Autophosphorylated.

It catalyses the reaction L-tyrosyl-[protein] + ATP = O-phospho-L-tyrosyl-[protein] + ADP + H(+). Functionally, required for growth within macrophages. Catalyzes the phosphorylation of PtpA on the tyrosine residues at positions 128 and 129, thereby increasing PtpA phosphatase activity and promoting pathogenicity. The protein is Tyrosine-protein kinase PtkA of Mycobacterium bovis (strain ATCC BAA-935 / AF2122/97).